The sequence spans 447 residues: Rab GDP dissociation inhibitor alpha (447 aa).

This sequence belongs to the Rab GDI family. In terms of assembly, interacts with RHOH. Interacts with the non-phosphorylated forms of RAB1A, RAB3A, RAB5A, RAB5B, RAB5C, RAB8A, RAB8B, RAB10, RAB12, RAB35, and RAB43. As to expression, brain; predominant in neural and sensory tissues.

It localises to the cytoplasm. The protein localises to the golgi apparatus. It is found in the trans-Golgi network. Functionally, regulates the GDP/GTP exchange reaction of most Rab proteins by inhibiting the dissociation of GDP from them, and the subsequent binding of GTP to them. Promotes the dissociation of GDP-bound Rab proteins from the membrane and inhibits their activation. Promotes the dissociation of RAB1A, RAB3A, RAB5A and RAB10 from membranes. This Homo sapiens (Human) protein is Rab GDP dissociation inhibitor alpha (GDI1).